The sequence spans 294 residues: Phosphoribosylaminoimidazole-succinocarboxamide synthase (294 aa).

It belongs to the SAICAR synthetase family.

The enzyme catalyses 5-amino-1-(5-phospho-D-ribosyl)imidazole-4-carboxylate + L-aspartate + ATP = (2S)-2-[5-amino-1-(5-phospho-beta-D-ribosyl)imidazole-4-carboxamido]succinate + ADP + phosphate + 2 H(+). Its pathway is purine metabolism; IMP biosynthesis via de novo pathway; 5-amino-1-(5-phospho-D-ribosyl)imidazole-4-carboxamide from 5-amino-1-(5-phospho-D-ribosyl)imidazole-4-carboxylate: step 1/2. This Rhodococcus jostii (strain RHA1) protein is Phosphoribosylaminoimidazole-succinocarboxamide synthase.